The sequence spans 137 residues: Envelope glycoprotein L (137 aa).

The N-terminal stretch at 1–25 (MRAVGVFLATCLVTIFVLPTWGNWA) is a signal peptide. Residues 23-128 (NWAYPCCHVT…SVEDLFGANL (106 aa)) form an interaction with gH region. Disulfide bonds link C28–C56 and C29–C79.

Belongs to the herpesviridae glycoprotein L family. Interacts with glycoprotein H (gH); this interaction is necessary for the correct processing and cell surface expression of gH. The heterodimer gH/gL seems to interact with gB trimers during fusion. The heterodimer gH/gL interacts with host EPHA2 to facilitate virus internalization and fusion.

The protein localises to the virion membrane. It localises to the host cell membrane. Its subcellular location is the host Golgi apparatus. It is found in the host trans-Golgi network. Functionally, the heterodimer glycoprotein H-glycoprotein L is required for the fusion of viral and plasma membranes leading to virus entry into the host cell. Acts as a functional inhibitor of gH and maintains gH in an inhibited form. Upon binding to host integrins, gL dissociates from gH leading to activation of the viral fusion glycoproteins gB and gH. The heterodimer gH/gL targets also host EPHA2 to promote viral entry. This chain is Envelope glycoprotein L, found in Homo sapiens (Human).